Here is a 266-residue protein sequence, read N- to C-terminus: Glucosamine-6-phosphate deaminase (266 aa).

The Proton acceptor; for enolization step role is filled by Asp72. Catalysis depends on Asp141, which acts as the For ring-opening step. Residue His143 is the Proton acceptor; for ring-opening step of the active site. Residue Glu148 is the For ring-opening step of the active site.

The protein belongs to the glucosamine/galactosamine-6-phosphate isomerase family. NagB subfamily. Homohexamer.

The catalysed reaction is alpha-D-glucosamine 6-phosphate + H2O = beta-D-fructose 6-phosphate + NH4(+). It participates in amino-sugar metabolism; N-acetylneuraminate degradation; D-fructose 6-phosphate from N-acetylneuraminate: step 5/5. Allosterically activated by N-acetylglucosamine 6-phosphate (GlcNAc6P). Catalyzes the reversible isomerization-deamination of glucosamine 6-phosphate (GlcN6P) to form fructose 6-phosphate (Fru6P) and ammonium ion. The chain is Glucosamine-6-phosphate deaminase from Pectobacterium carotovorum subsp. carotovorum (strain PC1).